Consider the following 94-residue polypeptide: Long neurotoxin LNTX37 (94 aa).

Positions 1-21 (MKTLLLTLVVVTIMCLDLGYT) are cleaved as a signal peptide. Cystine bridges form between cysteine 24/cysteine 43, cysteine 36/cysteine 64, cysteine 49/cysteine 53, cysteine 68/cysteine 79, and cysteine 80/cysteine 85.

The protein belongs to the three-finger toxin family. Long-chain subfamily. Type II alpha-neurotoxin sub-subfamily. As to expression, expressed by the venom gland.

The protein localises to the secreted. Its function is as follows. Binds with high affinity to muscular (alpha-1/CHRNA1) and neuronal (alpha-7/CHRNA7) nicotinic acetylcholine receptor (nAChR) and inhibits acetylcholine from binding to the receptor, thereby impairing neuromuscular and neuronal transmission. This Ophiophagus hannah (King cobra) protein is Long neurotoxin LNTX37.